We begin with the raw amino-acid sequence, 269 residues long: 1-(5-phosphoribosyl)-5-[(5-phosphoribosylamino)methylideneamino] imidazole-4-carboxamide isomerase (269 aa).

Asp10 functions as the Proton acceptor in the catalytic mechanism. Asp132 acts as the Proton donor in catalysis.

This sequence belongs to the HisA/HisF family.

The protein resides in the cytoplasm. It catalyses the reaction 1-(5-phospho-beta-D-ribosyl)-5-[(5-phospho-beta-D-ribosylamino)methylideneamino]imidazole-4-carboxamide = 5-[(5-phospho-1-deoxy-D-ribulos-1-ylimino)methylamino]-1-(5-phospho-beta-D-ribosyl)imidazole-4-carboxamide. Its pathway is amino-acid biosynthesis; L-histidine biosynthesis; L-histidine from 5-phospho-alpha-D-ribose 1-diphosphate: step 4/9. The chain is 1-(5-phosphoribosyl)-5-[(5-phosphoribosylamino)methylideneamino] imidazole-4-carboxamide isomerase from Xylella fastidiosa (strain M12).